Consider the following 290-residue polypeptide: 4-diphosphocytidyl-2-C-methyl-D-erythritol kinase (290 aa).

The active site involves lysine 10. 95–105 (PVAAGLAGGSS) is an ATP binding site. Aspartate 137 is an active-site residue.

The protein belongs to the GHMP kinase family. IspE subfamily.

The catalysed reaction is 4-CDP-2-C-methyl-D-erythritol + ATP = 4-CDP-2-C-methyl-D-erythritol 2-phosphate + ADP + H(+). It functions in the pathway isoprenoid biosynthesis; isopentenyl diphosphate biosynthesis via DXP pathway; isopentenyl diphosphate from 1-deoxy-D-xylulose 5-phosphate: step 3/6. In terms of biological role, catalyzes the phosphorylation of the position 2 hydroxy group of 4-diphosphocytidyl-2C-methyl-D-erythritol. The protein is 4-diphosphocytidyl-2-C-methyl-D-erythritol kinase of Geobacillus kaustophilus (strain HTA426).